Consider the following 445-residue polypeptide: Rab GDP dissociation inhibitor beta (445 aa).

Met-1 carries the N-acetylmethionine modification. At Lys-57 the chain carries N6-succinyllysine. Position 112 is an N6-acetyllysine (Lys-112). A Phosphoserine modification is found at Ser-130. Lys-269 is modified (N6-acetyllysine). At Ser-382 the chain carries Phosphoserine.

Belongs to the Rab GDI family. Interacts with RHOH. Interacts with the GDP-bound inactive forms of RAB3A, RAB3B, RAB3C, RAB5A, RAB5B, RAB5C, RAB8A, RAB8B, RAB10, RAB12, RAB35, and RAB43; binds RAB3D to a lesser extent. Interacts with DZIP1; this interaction negatively regulates the interaction of GDI2 with GDP-bound RAB8A. Ubiquitously expressed.

It is found in the cytoplasm. Its subcellular location is the membrane. It localises to the golgi apparatus. The protein localises to the trans-Golgi network. In terms of biological role, GDP-dissociation inhibitor preventing the GDP to GTP exchange of most Rab proteins. By keeping these small GTPases in their inactive GDP-bound form regulates intracellular membrane trafficking. Negatively regulates protein transport to the cilium and ciliogenesis through the inhibition of RAB8A. In Rattus norvegicus (Rat), this protein is Rab GDP dissociation inhibitor beta (Gdi2).